The primary structure comprises 373 residues: 3 beta-hydroxysteroid dehydrogenase/Delta 5--&gt;4-isomerase type 2 (373 aa).

Tyr-155 acts as the Proton acceptor in catalysis. Lys-159 contacts NAD(+). The chain crosses the membrane as a helical span at residues Val-288–Val-308.

Belongs to the 3-beta-HSD family. High levels in adrenal gland, kidney and male liver. Low levels in female liver.

The protein resides in the endoplasmic reticulum membrane. Its subcellular location is the mitochondrion membrane. It catalyses the reaction a 3beta-hydroxy-Delta(5)-steroid + NAD(+) = a 3-oxo-Delta(5)-steroid + NADH + H(+). The enzyme catalyses a 3-oxo-Delta(5)-steroid = a 3-oxo-Delta(4)-steroid. It carries out the reaction pregnenolone + NAD(+) = pregn-5-ene-3,20-dione + NADH + H(+). The catalysed reaction is pregn-5-ene-3,20-dione = progesterone. It catalyses the reaction 3beta-hydroxyandrost-5-en-17-one + NAD(+) = androst-5-ene-3,17-dione + NADH + H(+). The enzyme catalyses androst-5-ene-3,17-dione = androst-4-ene-3,17-dione. Its pathway is lipid metabolism; steroid biosynthesis. In terms of biological role, 3-beta-HSD is a bifunctional enzyme, that catalyzes the oxidative conversion of Delta(5)-ene-3-beta-hydroxy steroid, and the oxidative conversion of ketosteroids. The 3-beta-HSD enzymatic system plays a crucial role in the biosynthesis of all classes of hormonal steroids. The polypeptide is 3 beta-hydroxysteroid dehydrogenase/Delta 5--&gt;4-isomerase type 2 (HSD3B2) (Mesocricetus auratus (Golden hamster)).